Consider the following 240-residue polypeptide: Ribonuclease P protein component 3 (240 aa).

The protein belongs to the eukaryotic/archaeal RNase P protein component 3 family. Consists of a catalytic RNA component and at least 4-5 protein subunits.

It is found in the cytoplasm. It catalyses the reaction Endonucleolytic cleavage of RNA, removing 5'-extranucleotides from tRNA precursor.. Functionally, part of ribonuclease P, a protein complex that generates mature tRNA molecules by cleaving their 5'-ends. In Halorubrum lacusprofundi (strain ATCC 49239 / DSM 5036 / JCM 8891 / ACAM 34), this protein is Ribonuclease P protein component 3.